Here is a 247-residue protein sequence, read N- to C-terminus: 2,3-bisphosphoglycerate-dependent phosphoglycerate mutase (247 aa).

Substrate is bound by residues 8 to 15 (RHGESQWN), 21 to 22 (TG), Arg60, 87 to 90 (ERHY), Lys98, 114 to 115 (RR), and 183 to 184 (GN). His9 (tele-phosphohistidine intermediate) is an active-site residue. Glu87 functions as the Proton donor/acceptor in the catalytic mechanism.

Belongs to the phosphoglycerate mutase family. BPG-dependent PGAM subfamily.

The enzyme catalyses (2R)-2-phosphoglycerate = (2R)-3-phosphoglycerate. It functions in the pathway carbohydrate degradation; glycolysis; pyruvate from D-glyceraldehyde 3-phosphate: step 3/5. Catalyzes the interconversion of 2-phosphoglycerate and 3-phosphoglycerate. This chain is 2,3-bisphosphoglycerate-dependent phosphoglycerate mutase, found in Chlorobium chlorochromatii (strain CaD3).